A 7524-amino-acid chain; its full sequence is Mucin-19 (7524 aa).

An N-terminal signal peptide occupies residues 1–20; that stretch reads MKLILLYLAVVLCFVGKGAA. Residues 20–47 are disordered; the sequence is ARSPTTTRTPTPSTSEKASHVPEATPTY. Residues 21–34 show a composition bias toward low complexity; sequence RSPTTTRTPTPSTS. In terms of domain architecture, VWFD 1 spans 55 to 225; it reads GEATMWGKDK…VCEDGVQYCD (171 aa). Cys-79 and Cys-224 are disulfide-bonded. The region spanning 298-353 is the TIL domain; the sequence is CPGKHIYKECGPSNPPTCSNVAPFQDSECVSGCTCPEGYLLDDIGEKGKCVLKEKC. 2 VWFD domains span residues 392–568 and 851–1025; these read GICK…EGSP and STCH…QECS. Cystine bridges form between Cys-394/Cys-529, Cys-434/Cys-442, Cys-853/Cys-989, Cys-875/Cys-1024, Cys-884/Cys-986, and Cys-900/Cys-907. The segment covering 1244–1261 has biased composition (low complexity); that stretch reads AAATRASSSTSGSVETSV. Disordered regions lie at residues 1244 to 7217 and 7249 to 7297; these read AAAT…SSLA and SVIK…CPDS. Residues 1262–1289 show a composition bias toward polar residues; sequence PATTSTSKAQAHITTASSTETSALNSTA. Composition is skewed to low complexity over residues 1320 to 7099 and 7112 to 7217; these read PAVS…AGSG and STSG…SSLA. A run of 36 repeats spans residues 1321–1483, 1484–1646, 1647–1809, 1810–1972, 1973–2135, 2136–2298, 2299–2461, 2462–2624, 2625–2787, 2788–2950, 2951–3113, 3114–3276, 3277–3439, 3440–3602, 3603–3765, 3766–3928, 3929–4091, 4092–4254, 4255–4417, 4418–4580, 4581–4743, 4744–4906, 4907–5069, 5070–5232, 5233–5395, 5396–5558, 5559–5721, 5722–5884, 5885–6047, 6048–6210, 6211–6373, 6374–6536, 6537–6699, 6700–6862, 6863–7025, and 7026–7188. An approximate repeats region spans residues 1321-7188; that stretch reads AVSTTSAGST…AETAGSTTGP (5868 aa). A compositionally biased stretch (polar residues) spans 7261–7291; it reads AKSNETTGRTTSMPASTSVAPGVTTSPNISQ. 2 VWFC domains span residues 7302 to 7368 and 7370 to 7432; these read PVCH…GHCE and RTCL…YKCK. 4 cysteine pairs are disulfide-bonded: Cys-7435-Cys-7482, Cys-7449-Cys-7496, Cys-7458-Cys-7512, and Cys-7462-Cys-7514. Residues 7435–7519 form the CTCK domain; that stretch reads CRTTPVNVTV…TTCSCRDQCE (85 aa).

As to expression, specifically expressed in sublingual salivary glands. Expressed by mucous cells of the submandibular gland and submucosal gland of the trachea. Expression is altered in sld (sublingual gland differentiation arrest) mutants.

The protein localises to the secreted. Functionally, may function in ocular mucus homeostasis. In Mus musculus (Mouse), this protein is Mucin-19 (Muc19).